We begin with the raw amino-acid sequence, 238 residues long: DNA damage-regulated autophagy modulator protein 1 (238 aa).

A run of 6 helical transmembrane segments spans residues 9–29, 53–73, 91–111, 116–136, 161–181, and 200–220; these read AFVP…SYVV, SGIF…TMYT, VFNL…GIVA, LAVP…GVVY, MAIS…ASLI, and VSAI…LTFI.

It belongs to the DRAM/TMEM150 family.

It localises to the lysosome membrane. In terms of biological role, lysosomal modulator of autophagy that plays a central role in p53/TP53-mediated apoptosis. Not involved in p73/TP73-mediated autophagy. In Mus musculus (Mouse), this protein is DNA damage-regulated autophagy modulator protein 1 (Dram1).